Reading from the N-terminus, the 98-residue chain is NADH-ubiquinone oxidoreductase chain 4L (98 aa).

3 helical membrane-spanning segments follow: residues 1-21, 26-46, and 61-81; these read MSLI…GLLM, LMSA…FTTL, and IILL…LVMI.

It belongs to the complex I subunit 4L family. Core subunit of respiratory chain NADH dehydrogenase (Complex I) which is composed of 45 different subunits.

Its subcellular location is the mitochondrion inner membrane. It carries out the reaction a ubiquinone + NADH + 5 H(+)(in) = a ubiquinol + NAD(+) + 4 H(+)(out). Core subunit of the mitochondrial membrane respiratory chain NADH dehydrogenase (Complex I) which catalyzes electron transfer from NADH through the respiratory chain, using ubiquinone as an electron acceptor. Part of the enzyme membrane arm which is embedded in the lipid bilayer and involved in proton translocation. The polypeptide is NADH-ubiquinone oxidoreductase chain 4L (MT-ND4L) (Physeter macrocephalus (Sperm whale)).